A 198-amino-acid polypeptide reads, in one-letter code: Recombination protein RecR (198 aa).

A C4-type zinc finger spans residues 57-72 (CSVCGHITDKDPCYIC). The region spanning 80–175 (SVICVVQESK…KVTRIAHGLP (96 aa)) is the Toprim domain.

The protein belongs to the RecR family.

In terms of biological role, may play a role in DNA repair. It seems to be involved in an RecBC-independent recombinational process of DNA repair. It may act with RecF and RecO. The polypeptide is Recombination protein RecR (Listeria monocytogenes serotype 4b (strain CLIP80459)).